Here is a 567-residue protein sequence, read N- to C-terminus: MADPYGDGKGLKQQQRQKLKPALEVEDFINLLHGSDPVRVELTRLENELQYKEKELGEAQAEIKALRLSERAREKAVEDLTEELTKVDGKLKLTESLLESKNLEAKKINDEKKAALAAQFAAEATLRRVHAAQKDDDMPPIEAILAPLEAELKLARHEIAKLQDDNRALDRLTKSKEAALLEAERTVQIALAKASLVDDLQNKNQELMKQIEICQEENKILDRMHRQKVAEVEKLTQTVRELEEAVLAGGAAANAVRDYQRKVQEMNEERKTLDRELARAKVSANRVAVVVANEWKDGNDKVMPVKQWLEERRILQGEMQQLRDKLAIAERAARSEAQLKDKFQLRLKVLEEGLRMSTTRTNVSAARRQSIGGADSLSKTNGFLSKRPSFQMRSSVSTTTTTLVNHAKGASKSFDGGCRSLDRYKGHVNGSGMNVSTDSSEDKESNNSDEKANEFTSVETEDTVSGLLYDTLQKEVIALRKACHEKDQSLKDKDDAVEMLAKKVDTLTKAMESEGKKRRMEVAAMEKEMAALRLEKEQDNKAKRFGSSSSQLPPGRTLPRSGSARNM.

Positions 38–341 (VRVELTRLEN…AARSEAQLKD (304 aa)) form a coiled coil. The required for targeting to microtubules stretch occupies residues 220 to 440 (ILDRMHRQKV…SGMNVSTDSS (221 aa)). 2 disordered regions span residues 425–457 (KGHVNGSGMNVSTDSSEDKESNNSDEKANEFTS) and 534–567 (LEKEQDNKAKRFGSSSSQLPPGRTLPRSGSARNM). Residues 440–453 (SEDKESNNSDEKAN) are compositionally biased toward basic and acidic residues. Residues 516 to 545 (KKRRMEVAAMEKEMAALRLEKEQDNKAKRF) are a coiled coil.

It belongs to the MAP70 family.

It is found in the cytoplasm. The protein localises to the cytoskeleton. Functionally, plant-specific protein that interact with microtubules. The sequence is that of Microtubule-associated protein 70-1 (MAP70.1) from Oryza sativa subsp. japonica (Rice).